A 377-amino-acid chain; its full sequence is GDSL esterase/lipase 4 (377 aa).

The N-terminal stretch at M1–S21 is a signal peptide. S44 serves as the catalytic Nucleophile. N135, N188, N194, N207, and N241 each carry an N-linked (GlcNAc...) asparagine glycan. Residues D342 and H345 contribute to the active site. N-linked (GlcNAc...) asparagine glycosylation is present at N364.

It belongs to the 'GDSL' lipolytic enzyme family.

The protein localises to the secreted. This chain is GDSL esterase/lipase 4 (GLIP4), found in Arabidopsis thaliana (Mouse-ear cress).